The primary structure comprises 195 residues: MQEAALLVLCYLLGSIPFSYFFTRMLTRQDIRKRGSGNVGATNVFRTSGPGVALLAFLGDLLKGLLAAWIGQSTGSQLLLVICVILAVIGHIYPVFLGFKGGKGVTTSAGIILFLMPDVTGILLLIFLAIVYFTRYVSLGSITVACLLPLVSLAMGKPWSYVVIGILMAALVVYHHRENIDRLRNGSEAKITDKA.

The next 5 helical transmembrane spans lie at 3-23 (EAAL…YFFT), 51-71 (GVAL…AWIG), 79-99 (LLVI…FLGF), 111-131 (IILF…LAIV), and 153-173 (LAMG…ALVV).

It belongs to the PlsY family. Probably interacts with PlsX.

The protein localises to the cell membrane. The catalysed reaction is an acyl phosphate + sn-glycerol 3-phosphate = a 1-acyl-sn-glycero-3-phosphate + phosphate. The protein operates within lipid metabolism; phospholipid metabolism. Functionally, catalyzes the transfer of an acyl group from acyl-phosphate (acyl-PO(4)) to glycerol-3-phosphate (G3P) to form lysophosphatidic acid (LPA). This enzyme utilizes acyl-phosphate as fatty acyl donor, but not acyl-CoA or acyl-ACP. This Syntrophomonas wolfei subsp. wolfei (strain DSM 2245B / Goettingen) protein is Glycerol-3-phosphate acyltransferase.